Reading from the N-terminus, the 341-residue chain is L-threonine 3-dehydrogenase (341 aa).

Cys-38 contacts Zn(2+). Active-site charge relay system residues include Thr-40 and His-43. 6 residues coordinate Zn(2+): His-63, Glu-64, Cys-93, Cys-96, Cys-99, and Cys-107. NAD(+) is bound by residues Ile-175, Asp-195, Arg-200, 262–264 (LGI), and 286–287 (IY).

The protein belongs to the zinc-containing alcohol dehydrogenase family. In terms of assembly, homotetramer. Zn(2+) serves as cofactor.

The protein localises to the cytoplasm. It carries out the reaction L-threonine + NAD(+) = (2S)-2-amino-3-oxobutanoate + NADH + H(+). It functions in the pathway amino-acid degradation; L-threonine degradation via oxydo-reductase pathway; glycine from L-threonine: step 1/2. In terms of biological role, catalyzes the NAD(+)-dependent oxidation of L-threonine to 2-amino-3-ketobutyrate. This Yersinia enterocolitica serotype O:8 / biotype 1B (strain NCTC 13174 / 8081) protein is L-threonine 3-dehydrogenase.